A 256-amino-acid chain; its full sequence is Triosephosphate isomerase (256 aa).

Residue 9 to 11 coordinates substrate; the sequence is NWK. Catalysis depends on H97, which acts as the Electrophile. Residue E169 is the Proton acceptor of the active site. Residues G175, S214, and 235 to 236 each bind substrate; that span reads GG.

Belongs to the triosephosphate isomerase family. As to quaternary structure, homodimer.

It localises to the cytoplasm. It catalyses the reaction D-glyceraldehyde 3-phosphate = dihydroxyacetone phosphate. It participates in carbohydrate biosynthesis; gluconeogenesis. The protein operates within carbohydrate degradation; glycolysis; D-glyceraldehyde 3-phosphate from glycerone phosphate: step 1/1. In terms of biological role, involved in the gluconeogenesis. Catalyzes stereospecifically the conversion of dihydroxyacetone phosphate (DHAP) to D-glyceraldehyde-3-phosphate (G3P). This chain is Triosephosphate isomerase, found in Aliivibrio salmonicida (strain LFI1238) (Vibrio salmonicida (strain LFI1238)).